Consider the following 147-residue polypeptide: Hemoglobin subunit epsilon-Y2 (147 aa).

In terms of domain architecture, Globin spans 3 to 147 (NFTAEEKTLI…VATALSHKYH (145 aa)). A Phosphoserine modification is found at Ser51. Heme b contacts are provided by His64 and His93.

The protein belongs to the globin family. As to expression, high expression in yolk sac blood islands, fetal liver, and embryonic erythrocytes. Very low levels in adult liver and spleen.

Functionally, hemoglobin epsilon chain is a beta-type chain found in early embryos. In Mus musculus (Mouse), this protein is Hemoglobin subunit epsilon-Y2 (Hbb-y).